The chain runs to 400 residues: 3-phenylpropionate/cinnamic acid dioxygenase ferredoxin--NAD(+) reductase component (400 aa).

Residue 5–36 coordinates FAD; it reads TIIIVGGGQAAAMAAASLRQQGFTGELHLFSD. 146–174 lines the NAD(+) pocket; that stretch reads SVVIVGAGTIGLELAASATQRRCKVTVIE.

This sequence belongs to the bacterial ring-hydroxylating dioxygenase ferredoxin reductase family. This dioxygenase system consists of four proteins: the two subunits of the hydroxylase component (HcaE and HcaF), a ferredoxin (HcaC) and a ferredoxin reductase (HcaD). It depends on FAD as a cofactor.

It catalyses the reaction 2 reduced [2Fe-2S]-[ferredoxin] + NAD(+) + H(+) = 2 oxidized [2Fe-2S]-[ferredoxin] + NADH. It functions in the pathway aromatic compound metabolism; 3-phenylpropanoate degradation. Part of the multicomponent 3-phenylpropionate dioxygenase, that converts 3-phenylpropionic acid (PP) and cinnamic acid (CI) into 3-phenylpropionate-dihydrodiol (PP-dihydrodiol) and cinnamic acid-dihydrodiol (CI-dihydrodiol), respectively. The sequence is that of 3-phenylpropionate/cinnamic acid dioxygenase ferredoxin--NAD(+) reductase component from Escherichia coli O157:H7.